The primary structure comprises 84 residues: Large ribosomal subunit protein bL27 (84 aa).

Positions 1-25 are disordered; it reads MAHKKAGGSSRNGRDSNGQRRGVKR.

The protein belongs to the bacterial ribosomal protein bL27 family.

In Desulfatibacillum aliphaticivorans, this protein is Large ribosomal subunit protein bL27.